We begin with the raw amino-acid sequence, 1002 residues long: BTB/POZ domain-containing protein At1g04390 (1002 aa).

2 BTB domains span residues 680 to 758 and 808 to 889; these read SDMR…EVES and SDVI…PKPP.

Its pathway is protein modification; protein ubiquitination. May act as a substrate-specific adapter of an E3 ubiquitin-protein ligase complex (CUL3-RBX1-BTB) which mediates the ubiquitination and subsequent proteasomal degradation of target proteins. In Arabidopsis thaliana (Mouse-ear cress), this protein is BTB/POZ domain-containing protein At1g04390.